A 443-amino-acid polypeptide reads, in one-letter code: MSAMTPREIVHELNKHIVGQEEAKRAVAIALRNRWRRMQLDSSLRDEITPKNILMIGPTGVGKTEIARRLAKLADAPFLKVEATKFTEVGYVGRDVESIIRDLADMAVKMLREQEMKRHEHRALDAAEDRILDALLPPPRDFNEDSQRTNADSSTRQLFRKKLREGELDDKEIEIDLRSSGAGVEIMAPPGMEEMTSQLQSMFSNLSSDKRKTRKMKVADAMKRVKDEEAAKLVNEEEIKQKAIQAVEQNGIVFIDEIDKVAKRSENTSSDVSREGVQRDLLPLIEGSTVSTKYGSIRTDHILFIASGAFHLSKPSDLIPELQGRLPIRVELQALTPDDFKRILTEPDASLVQQYEALMGTEGVKLTFADDAIARIAEVAYKVNETTENIGARRLHTVLERLLESLSYDAGDQVTDTFEVTADYVDEKLGELSEDEDLSRYIL.

ATP contacts are provided by residues Val-18 and 60 to 65 (GVGKTE). The segment at 136–158 (LPPPRDFNEDSQRTNADSSTRQL) is disordered. A compositionally biased stretch (polar residues) spans 148–157 (RTNADSSTRQ). 3 residues coordinate ATP: Asp-256, Glu-321, and Arg-393.

This sequence belongs to the ClpX chaperone family. HslU subfamily. As to quaternary structure, a double ring-shaped homohexamer of HslV is capped on each side by a ring-shaped HslU homohexamer. The assembly of the HslU/HslV complex is dependent on binding of ATP.

It localises to the cytoplasm. ATPase subunit of a proteasome-like degradation complex; this subunit has chaperone activity. The binding of ATP and its subsequent hydrolysis by HslU are essential for unfolding of protein substrates subsequently hydrolyzed by HslV. HslU recognizes the N-terminal part of its protein substrates and unfolds these before they are guided to HslV for hydrolysis. This is ATP-dependent protease ATPase subunit HslU from Marinobacter nauticus (strain ATCC 700491 / DSM 11845 / VT8) (Marinobacter aquaeolei).